The following is a 493-amino-acid chain: Fizzy-related protein homolog (493 aa).

Disordered regions lie at residues 31–51, 64–88, and 105–166; these read LTPANSPVSSPSKHGDRFIPS, INENEKSPSQNRKAKDATSDNGKDG, and EKVQ…SPRK. Phosphothreonine is present on Thr32. The span at 32–42 shows a compositional bias: polar residues; it reads TPANSPVSSPS. At Ser36 the chain carries Phosphoserine. Position 69 is an N6-acetyllysine (Lys69). Basic and acidic residues-rich tracts occupy residues 76–86 and 106–126; these read KAKDATSDNGK and KVQDPQTEDRRLQPSTPEHKG. Phosphoserine is present on residues Ser133, Ser138, Ser146, and Ser151. Over residues 146–160 the composition is skewed to polar residues; the sequence is SPYSLSPVSNKSQKL. Position 159 is an N6-acetyllysine (Lys159). WD repeat units lie at residues 182–222, 227–266, 269–306, 311–350, 353–395, 397–438, and 441–480; these read PELQ…VTRL, VEGDSVTSVGWSERGNLVAVGTHKGFVQIWDAAAGKKLSM, GHTARVGALAWNADQLSSGSRDRMILQRDIRTPPLQSE, GHRQEVCGLKWSTDHQLLASGGNDNKLLVWNHSSLSPVQQ, EHLA…PLQC, DTGS…QVAK, and GHSYRVLYLAMSPDGEAIVTGAGDETLRFWNVFSKTRSTK.

The protein belongs to the WD repeat CDC20/Fizzy family. The unphosphorylated form interacts with APC/C during mitosis. Interacts with NINL. Interacts (in complex with the anaphase promoting complex APC) with MAD2L2; inhibits FZR1-mediated APC/C activation. Interacts with SIRT2. Interacts with USP37. Interacts (via WD repeats) with MAK. Interacts with RBBP8/CtIP; this interaction leads to RBBP8 proteasomal degradation. Interacts with HECW2. Interacts with SASS6; the interaction is regulated by CENATAC and leads to SASS6 proteasomal degradation. Interacts (via N-terminus) with CCNF. Interacts with CDC6. Interacts with TK1 (via the KEN box). In terms of processing, acetylated. Deacetylated by SIRT2 at Lys-69 and Lys-159; deacetylation enhances the interaction of FZR1 with CDC27, leading to activation of anaphase promoting complex/cyclosome (APC/C). Following DNA damage, it is dephosphorylated by CDC14B in G2 phase, leading to its reassociation with the APC/C, and allowing an efficient G2 DNA damage checkpoint. Phosphorylated by MAK.

Its pathway is protein modification; protein ubiquitination. Substrate-specific adapter for the anaphase promoting complex/cyclosome (APC/C) E3 ubiquitin-protein ligase complex. Associates with the APC/C in late mitosis, in replacement of CDC20, and activates the APC/C during anaphase and telophase. The APC/C remains active in degrading substrates to ensure that positive regulators of the cell cycle do not accumulate prematurely. At the G1/S transition FZR1 is phosphorylated, leading to its dissociation from the APC/C. Following DNA damage, it is required for the G2 DNA damage checkpoint: its dephosphorylation and reassociation with the APC/C leads to the ubiquitination of PLK1, preventing entry into mitosis. Acts as an adapter for APC/C to target the DNA-end resection factor RBBP8/CtIP for ubiquitination and subsequent proteasomal degradation. Through the regulation of RBBP8/CtIP protein turnover, may play a role in DNA damage response, favoring DNA double-strand repair through error-prone non-homologous end joining (NHEJ) over error-free, RBBP8-mediated homologous recombination (HR). This Mus musculus (Mouse) protein is Fizzy-related protein homolog (Fzr1).